The following is a 554-amino-acid chain: Solute carrier family 22 member 2 (554 aa).

The Cytoplasmic segment spans residues 1 to 21 (MPTVDDILEQVGHFHFFQKQT). The chain crosses the membrane as a helical span at residues 22–42 (FFLLALISAAFTPIYVGIVFL). Residues 43–149 (GFTPDHRCRS…LVCARSWMLD (107 aa)) lie on the Extracellular side of the membrane. The N-linked (GlcNAc...) asparagine glycan is linked to Asn71. A helical transmembrane segment spans residues 150–170 (LFQSAVNIGFFIGSVGIGYLA). Residues 171–176 (DRFGRK) lie on the Cytoplasmic side of the membrane. The helical transmembrane segment at 177-197 (LCLLVTILINAAAGVLMAVSP) threads the bilayer. N-linked (GlcNAc...) asparagine glycosylation occurs at Asn198. The Extracellular portion of the chain corresponds to 198–209 (NYTWMLIFRLIQ). Residues 210–230 (GLVSKAGWLIGYILITEFVGL) traverse the membrane as a helical segment. The Cytoplasmic portion of the chain corresponds to 231–237 (NYRRTVG). The helical transmembrane segment at 238–258 (ILYQVAFTVGLLVLAGVAYAL) threads the bilayer. The Extracellular portion of the chain corresponds to 259–262 (PRWR). A helical membrane pass occupies residues 263-283 (WLQLTVTLPYFCFLLYYWCIP). A Proline-rich sequence motif is present at residues 283–287 (PESPR). Topologically, residues 284–348 (ESPRWLISQN…RTPQIRKHTC (65 aa)) are cytoplasmic. Residues 349–369 (ILMYNWFTSSVLYQGLIMHLG) traverse the membrane as a helical segment. The Extracellular portion of the chain corresponds to 370–374 (LAGGD). Residues 375–395 (IYLDFFYSALVEFPAAFLIIA) form a helical membrane-spanning segment. At 396-403 (TIDRVGRR) the chain is on the cytoplasmic side. The helical transmembrane segment at 404–424 (YPWAVSNMVAGAACLASVFVP) threads the bilayer. The Extracellular segment spans residues 425–427 (DDL). A helical membrane pass occupies residues 428–450 (QGLRITVACLGRMGITMAYEMVC). At 451–463 (LVNAELYPTFIRN) the chain is on the cytoplasmic side. The helical transmembrane segment at 464 to 484 (LGVLVCSSLCDVGGIVTPFLV) threads the bilayer. Over 485–493 (YRLTAIWLQ) the chain is Extracellular. A helical transmembrane segment spans residues 494–514 (LPLVVFAVVGLVAGGLVLMLP). The Cytoplasmic portion of the chain corresponds to 515–554 (ETKGRTLPETIEEAENLQRPRKNREKVIYVHVRKADGPLT).

The protein belongs to the major facilitator (TC 2.A.1) superfamily. Organic cation transporter (TC 2.A.1.19) family. In terms of processing, tyrosine phosphorylated. In terms of tissue distribution, expressed in kidney.

The protein resides in the basolateral cell membrane. It localises to the basal cell membrane. The catalysed reaction is (R)-noradrenaline(out) = (R)-noradrenaline(in). It catalyses the reaction (R)-adrenaline(out) = (R)-adrenaline(in). It carries out the reaction serotonin(out) = serotonin(in). The enzyme catalyses dopamine(out) = dopamine(in). The catalysed reaction is histamine(out) = histamine(in). It catalyses the reaction thiamine(in) = thiamine(out). It carries out the reaction creatinine(in) = creatinine(out). The enzyme catalyses 1-methylnicotinamide(out) = 1-methylnicotinamide(in). The catalysed reaction is guanidine(out) = guanidine(in). It catalyses the reaction choline(out) = choline(in). It carries out the reaction agmatine(out) = agmatine(in). The enzyme catalyses putrescine(out) = putrescine(in). The catalysed reaction is spermidine(in) = spermidine(out). It catalyses the reaction tyramine(in) = tyramine(out). It carries out the reaction L-histidyl-L-proline diketopiperazine(in) = L-histidyl-L-proline diketopiperazine(out). The enzyme catalyses (R)-salsolinol(in) = (R)-salsolinol(out). The catalysed reaction is N-methyl-(R)-salsolinol(in) = N-methyl-(R)-salsolinol(out). It catalyses the reaction acetylcholine(in) = acetylcholine(out). It carries out the reaction prostaglandin F2alpha(out) = prostaglandin F2alpha(in). The enzyme catalyses prostaglandin E2(out) = prostaglandin E2(in). With respect to regulation, tyrosine phosphorylation of the transporter leads to activation of the transport activity. Inhibited by cGMP, most likely through a cGMP-binding protein that interacts with OCT2. In terms of biological role, electrogenic voltage-dependent transporter that mediates the transport of a variety of organic cations such as endogenous bioactive amines, cationic drugs and xenobiotics. Functions as a Na(+)-independent, bidirectional uniporter. Cation cellular uptake or release is driven by the electrochemical potential, i.e. membrane potential and concentration gradient. However, may also engage electroneutral cation exchange when saturating concentrations of cation substrates are reached. Predominantly expressed at the basolateral membrane of hepatocytes and proximal tubules and involved in the uptake and disposition of cationic compounds by hepatic and renal clearance from the blood flow. Implicated in monoamine neurotransmitters uptake such as histamine, dopamine, adrenaline/epinephrine, noradrenaline/norepinephrine, serotonin and tyramine, thereby supporting a physiological role in the central nervous system by regulating interstitial concentrations of neurotransmitters. Also capable of transporting dopaminergic neuromodulators cyclo(his-pro), salsolinol and N-methyl-salsolinol, thereby involved in the maintenance of dopaminergic cell integrity in the central nervous system. Mediates the bidirectional transport of acetylcholine (ACh) at the apical membrane of ciliated cell in airway epithelium, thereby playing a role in luminal release of ACh from bronchial epithelium. Also transports guanidine and endogenous monoamines such as vitamin B1/thiamine, creatinine and N-1-methylnicotinamide (NMN). Mediates the uptake and efflux of quaternary ammonium compound choline. Mediates the bidirectional transport of polyamine agmatine and the uptake of polyamines putrescine and spermidine. Able to transport non-amine endogenous compounds such as prostaglandin E2 (PGE2) and prostaglandin F2-alpha (PGF2-alpha). Also involved in the uptake of xenobiotic 4-(4-(dimethylamino)styryl)-N-methylpyridinium (ASP). May contribute to regulate the transport of organic compounds in testis across the blood-testis-barrier. This Oryctolagus cuniculus (Rabbit) protein is Solute carrier family 22 member 2 (SLC22A2).